The primary structure comprises 330 residues: uncharacterized protein (330 aa).

The next 10 membrane-spanning stretches (helical) occupy residues 27-47 (MGAY…VVVG), 56-76 (VFLS…MLLF), 90-110 (VFVL…CLLY), 119-139 (ESGI…FFLL), 147-167 (TLIG…FGAG), 176-196 (LFGN…TLMA), 206-226 (LAIS…FALF), 243-263 (YVLY…YSGV), 270-290 (VSGI…GVIL), and 294-314 (FEFV…VTVI). 2 EamA domains span residues 38-163 (AIVG…AINL) and 187-314 (IGEA…VTVI).

Belongs to the EamA transporter family.

The protein resides in the cell membrane. This is an uncharacterized protein from Bacillus subtilis (strain 168).